The following is a 501-amino-acid chain: Rhazimal synthase (501 aa).

A helical transmembrane segment spans residues 4-24 (MQLSFASAVVYSLIFFVFLLV). N-linked (GlcNAc...) asparagine glycosylation occurs at Asn-282. Cys-442 is a heme binding site.

It belongs to the cytochrome P450 family. Requires heme as cofactor.

The protein resides in the membrane. The catalysed reaction is (19E)-geissoschizine + reduced [NADPH--hemoprotein reductase] + O2 = rhazimal + oxidized [NADPH--hemoprotein reductase] + 2 H2O + H(+). It carries out the reaction (19E)-geissoschizine + reduced [NADPH--hemoprotein reductase] + O2 = akuammicine + formate + oxidized [NADPH--hemoprotein reductase] + H2O + H(+). The protein operates within alkaloid biosynthesis. Functionally, a cytochrome P450 monooxygenase involved in the biosynthesis of akuammilan monoterpene indole alkaloids (MIAs) natural products, components with various biological properties such as antidiabetic, antibacterial, anti-inflammatory, anticancer, and antimalarial activities. Catalyzes the conversion of geissoschizine to rhazimal. Can also, with lower efficiency, support the conversion of geissoschizine to akuammicine. The chain is Rhazimal synthase from Alstonia scholaris (Dogbane).